The sequence spans 553 residues: Putative transport protein YidE (553 aa).

5 consecutive transmembrane segments (helical) span residues 4–24 (IALTVSVLALVAVVGLWIGNI), 28–48 (GVGFGIGGVLFGGIIVGHFVD), 65–85 (FGLILFVYTIGIQVGPGFFAS), 95–115 (LFAVLIVIMGGLVTAILHKIF), and 158–178 (MSYAMAYPFGICGILLTMWLM). RCK C-terminal domains follow at residues 192 to 276 (KHES…VIGK) and 279 to 361 (DTSL…VVGN). 6 helical membrane-spanning segments follow: residues 371–391 (MLPVFIGIGLGVLLGSIPLFV), 393–413 (GFPVALKLGLAGGPLIMALIL), 437–457 (LGIVLFLAVVGLKSGGDFVDT), 464–484 (LSWIGYGIFITAIPLITIGLL), 493–513 (YLTLCGMLAGSMTDPPALAFA), and 533–553 (LVMFLRIITPQLLAVIFWGMG).

It belongs to the AAE transporter (TC 2.A.81) family. YidE subfamily.

The protein resides in the cell membrane. The sequence is that of Putative transport protein YidE from Salmonella paratyphi C (strain RKS4594).